The following is a 269-amino-acid chain: tRNA pseudouridine synthase A (269 aa).

Catalysis depends on D51, which acts as the Nucleophile. Y109 contacts substrate.

Belongs to the tRNA pseudouridine synthase TruA family. In terms of assembly, homodimer.

It carries out the reaction uridine(38/39/40) in tRNA = pseudouridine(38/39/40) in tRNA. In terms of biological role, formation of pseudouridine at positions 38, 39 and 40 in the anticodon stem and loop of transfer RNAs. This Aeromonas hydrophila subsp. hydrophila (strain ATCC 7966 / DSM 30187 / BCRC 13018 / CCUG 14551 / JCM 1027 / KCTC 2358 / NCIMB 9240 / NCTC 8049) protein is tRNA pseudouridine synthase A.